The primary structure comprises 680 residues: Transketolase 1 (680 aa).

Residue His30 participates in substrate binding. Thiamine diphosphate-binding positions include His69 and 116 to 118; that span reads GPL. Mg(2+) is bound at residue Asp157. Thiamine diphosphate contacts are provided by Gly158 and Asn187. Mg(2+) contacts are provided by Asn187 and Ile189. His263 provides a ligand contact to substrate. His263 contacts thiamine diphosphate. 2 positions are modified to phosphoserine: Ser286 and Ser335. Residues Arg359 and Ser386 each contribute to the substrate site. Residue Ser402 is modified to Phosphoserine. Positions 418 and 445 each coordinate thiamine diphosphate. Glu418 functions as the Proton donor in the catalytic mechanism. His469 and Asp477 together coordinate substrate. A Phosphoserine modification is found at Ser492. Residue Arg528 coordinates substrate. Lys647 participates in a covalent cross-link: Glycyl lysine isopeptide (Lys-Gly) (interchain with G-Cter in ubiquitin).

The protein belongs to the transketolase family. Homodimer. Mg(2+) serves as cofactor. Ca(2+) is required as a cofactor. It depends on Mn(2+) as a cofactor. Requires Co(2+) as cofactor. The cofactor is thiamine diphosphate.

It carries out the reaction D-sedoheptulose 7-phosphate + D-glyceraldehyde 3-phosphate = aldehydo-D-ribose 5-phosphate + D-xylulose 5-phosphate. Its function is as follows. Catalyzes the transfer of a two-carbon ketol group from a ketose donor to an aldose acceptor, via a covalent intermediate with the cofactor thiamine pyrophosphate. This chain is Transketolase 1 (TKL1), found in Saccharomyces cerevisiae (strain ATCC 204508 / S288c) (Baker's yeast).